The sequence spans 648 residues: Rab11 family-interacting protein 1 (648 aa).

Residues 1–129 (MSLAASAGRG…DQSRRKKQWY (129 aa)) enclose the C2 domain. A compositionally biased stretch (basic and acidic residues) spans 164–188 (SMKDKSRNPFGKLKDKIKGKNKDNT). 3 disordered regions span residues 164–470 (SMKD…GRKG), 483–503 (VRRP…SQNP), and 516–555 (VESK…PKIT). Positions 189–201 (SDTASAIVPSTTP) are enriched in polar residues. Phosphoserine is present on residues Ser-205, Ser-209, and Ser-237. 2 stretches are compositionally biased toward polar residues: residues 227–242 (PSLQ…SVLP) and 271–296 (SSAS…SNFS). Ser-304, Ser-319, Ser-343, Ser-345, Ser-347, Ser-349, Ser-360, Ser-361, and Ser-386 each carry phosphoserine. Positions 314–323 (DSLSRSNVCI) are enriched in polar residues. 2 stretches are compositionally biased toward basic and acidic residues: residues 381–394 (SDRR…KDSM) and 422–436 (ATKE…ESKK). Phosphoserine is present on Ser-438. The span at 445–454 (GKKDVAKGSE) shows a compositional bias: basic and acidic residues. In terms of domain architecture, FIP-RBD spans 576-638 (KKYQPSDPAF…EETPNILRVP (63 aa)). The tract at residues 584–648 (AFAYAQLTHD…AQTGKKAGKM (65 aa)) is necessary for interaction with RAB4A and RAB11A, subcellular location and endosomal recycling.

Homooligomer. Interacts with RAB11A, RAB11B, RAB25, RAB4A and RAB14.

Its subcellular location is the recycling endosome. It is found in the cytoplasmic vesicle. Functionally, a Rab11 effector protein involved in the endosomal recycling process. Also involved in controlling membrane trafficking along the phagocytic pathway and in phagocytosis. Interaction with RAB14 may function in the process of neurite formation. This is Rab11 family-interacting protein 1 from Rattus norvegicus (Rat).